The primary structure comprises 130 residues: UPF0102 protein AHA_3896 (130 aa).

The protein belongs to the UPF0102 family.

The chain is UPF0102 protein AHA_3896 from Aeromonas hydrophila subsp. hydrophila (strain ATCC 7966 / DSM 30187 / BCRC 13018 / CCUG 14551 / JCM 1027 / KCTC 2358 / NCIMB 9240 / NCTC 8049).